The primary structure comprises 111 residues: Colicin-Ia immunity protein (111 aa).

The next 2 membrane-spanning stretches (helical) occupy residues 33–53 and 85–105; these read LLFW…KWYI and TGTV…SVII.

Its subcellular location is the cell membrane. This protein is able to protect a cell, which harbors the plasmid ColIa-CA53 encoding colicin Ia, against colicin Ia. This chain is Colicin-Ia immunity protein, found in Escherichia coli.